Consider the following 213-residue polypeptide: Na(+)-translocating NADH-quinone reductase subunit D (213 aa).

The next 7 membrane-spanning stretches (helical) occupy residues 21 to 41, 42 to 62, 77 to 97, 101 to 121, 131 to 151, 153 to 173, and 183 to 203; these read ILIAILGICSALAVTTTVQTA, ITMGIAVSIVTGCSSFFVSLL, IIISLFVIVIDQFLKAFFFDI, LSVFVGLIITNCIVMGRSESL, FLDGFASGLGYGWVLLVIGVI, ELFGFGTLMGFRIIPQFVYAS, and LSLMVLAPSAFFLLGIMIWLV.

This sequence belongs to the NqrDE/RnfAE family. As to quaternary structure, composed of six subunits; NqrA, NqrB, NqrC, NqrD, NqrE and NqrF.

It is found in the cell inner membrane. The catalysed reaction is a ubiquinone + n Na(+)(in) + NADH + H(+) = a ubiquinol + n Na(+)(out) + NAD(+). NQR complex catalyzes the reduction of ubiquinone-1 to ubiquinol by two successive reactions, coupled with the transport of Na(+) ions from the cytoplasm to the periplasm. NqrA to NqrE are probably involved in the second step, the conversion of ubisemiquinone to ubiquinol. This is Na(+)-translocating NADH-quinone reductase subunit D from Chlamydia pneumoniae (Chlamydophila pneumoniae).